The sequence spans 309 residues: Aspartate carbamoyltransferase catalytic subunit (309 aa).

Carbamoyl phosphate is bound by residues R58 and T59. K86 lines the L-aspartate pocket. The carbamoyl phosphate site is built by R108, H136, and Q139. 2 residues coordinate L-aspartate: R170 and R224. G266 and P267 together coordinate carbamoyl phosphate.

This sequence belongs to the aspartate/ornithine carbamoyltransferase superfamily. ATCase family. Heterododecamer (2C3:3R2) of six catalytic PyrB chains organized as two trimers (C3), and six regulatory PyrI chains organized as three dimers (R2).

It catalyses the reaction carbamoyl phosphate + L-aspartate = N-carbamoyl-L-aspartate + phosphate + H(+). Its pathway is pyrimidine metabolism; UMP biosynthesis via de novo pathway; (S)-dihydroorotate from bicarbonate: step 2/3. Catalyzes the condensation of carbamoyl phosphate and aspartate to form carbamoyl aspartate and inorganic phosphate, the committed step in the de novo pyrimidine nucleotide biosynthesis pathway. This Campylobacter concisus (strain 13826) protein is Aspartate carbamoyltransferase catalytic subunit.